A 173-amino-acid polypeptide reads, in one-letter code: Myeloid-derived growth factor (173 aa).

Residues 1 to 31 (MAAPSGGWNGVGASLWAALLLGAVALRPAEA) form the signal peptide.

This sequence belongs to the MYDGF family. As to expression, expressed in eosinophils (at protein level). Expressed in bone marrow cells. Expressed in synovial tissue. Found in synovial fluid of patients with arthropaties.

It localises to the secreted. Its subcellular location is the endoplasmic reticulum-Golgi intermediate compartment. The protein resides in the endoplasmic reticulum. The protein localises to the golgi apparatus. In terms of biological role, bone marrow-derived monocyte and paracrine-acting protein that promotes cardiac myocyte survival and adaptive angiogenesis for cardiac protection and/or repair after myocardial infarction (MI). Stimulates endothelial cell proliferation through a MAPK1/3-, STAT3- and CCND1-mediated signaling pathway. Inhibits cardiac myocyte apoptosis in a PI3K/AKT-dependent signaling pathway. Involved in endothelial cell proliferation and angiogenesis. This Homo sapiens (Human) protein is Myeloid-derived growth factor.